The following is a 286-amino-acid chain: Lipoyl synthase (286 aa).

Residues C38, C43, C49, C64, C68, C71, and S276 each contribute to the [4Fe-4S] cluster site. The 216-residue stretch at 50 to 265 folds into the Radical SAM core domain; sequence WEQGVATFMI…ENIALDMGFL (216 aa).

Belongs to the radical SAM superfamily. Lipoyl synthase family. Requires [4Fe-4S] cluster as cofactor.

It is found in the cytoplasm. The enzyme catalyses [[Fe-S] cluster scaffold protein carrying a second [4Fe-4S](2+) cluster] + N(6)-octanoyl-L-lysyl-[protein] + 2 oxidized [2Fe-2S]-[ferredoxin] + 2 S-adenosyl-L-methionine + 4 H(+) = [[Fe-S] cluster scaffold protein] + N(6)-[(R)-dihydrolipoyl]-L-lysyl-[protein] + 4 Fe(3+) + 2 hydrogen sulfide + 2 5'-deoxyadenosine + 2 L-methionine + 2 reduced [2Fe-2S]-[ferredoxin]. The protein operates within protein modification; protein lipoylation via endogenous pathway; protein N(6)-(lipoyl)lysine from octanoyl-[acyl-carrier-protein]: step 2/2. Its function is as follows. Catalyzes the radical-mediated insertion of two sulfur atoms into the C-6 and C-8 positions of the octanoyl moiety bound to the lipoyl domains of lipoate-dependent enzymes, thereby converting the octanoylated domains into lipoylated derivatives. The sequence is that of Lipoyl synthase from Karelsulcia muelleri (strain GWSS) (Sulcia muelleri).